The following is a 419-amino-acid chain: Pregnancy-specific beta-1-glycoprotein 1 (419 aa).

The first 34 residues, 1–34, serve as a signal peptide directing secretion; the sequence is MGTLSAPPCTQRIKWKGLLLTASLLNFWNLPTTA. One can recognise an Ig-like V-type domain in the interval 35 to 144; it reads QVTIEAEPTK…TGRFTFTLHL (110 aa). 7 N-linked (GlcNAc...) asparagine glycosylation sites follow: asparagine 61, asparagine 104, asparagine 111, asparagine 199, asparagine 259, asparagine 268, and asparagine 303. Ig-like C2-type domains follow at residues 149 to 234, 240 to 327, and 335 to 410; these read PSIS…VTLN, PKPY…VTLN, and PRIY…KSMT. Cysteine 169 and cysteine 217 are disulfide-bonded. 2 cysteine pairs are disulfide-bonded: cysteine 262-cysteine 310 and cysteine 354-cysteine 394.

This sequence belongs to the immunoglobulin superfamily. CEA family.

It localises to the secreted. This chain is Pregnancy-specific beta-1-glycoprotein 1 (PSG1), found in Homo sapiens (Human).